A 176-amino-acid chain; its full sequence is NAD(P)H-quinone oxidoreductase subunit I, chloroplastic (176 aa).

2 4Fe-4S ferredoxin-type domains span residues 55–84 and 95–124; these read GRIH…VDWE and LNYS…MTEE. Cysteine 64, cysteine 67, cysteine 70, cysteine 74, cysteine 104, cysteine 107, cysteine 110, and cysteine 114 together coordinate [4Fe-4S] cluster.

Belongs to the complex I 23 kDa subunit family. In terms of assembly, NDH is composed of at least 16 different subunits, 5 of which are encoded in the nucleus. The cofactor is [4Fe-4S] cluster.

The protein resides in the plastid. The protein localises to the chloroplast thylakoid membrane. The catalysed reaction is a plastoquinone + NADH + (n+1) H(+)(in) = a plastoquinol + NAD(+) + n H(+)(out). The enzyme catalyses a plastoquinone + NADPH + (n+1) H(+)(in) = a plastoquinol + NADP(+) + n H(+)(out). Functionally, NDH shuttles electrons from NAD(P)H:plastoquinone, via FMN and iron-sulfur (Fe-S) centers, to quinones in the photosynthetic chain and possibly in a chloroplast respiratory chain. The immediate electron acceptor for the enzyme in this species is believed to be plastoquinone. Couples the redox reaction to proton translocation, and thus conserves the redox energy in a proton gradient. The chain is NAD(P)H-quinone oxidoreductase subunit I, chloroplastic from Populus alba (White poplar).